The following is a 604-amino-acid chain: ERAD-associated E3 ubiquitin-protein ligase component HRD3B (604 aa).

The first 25 residues, 1–25, serve as a signal peptide directing secretion; that stretch reads MRVSGQSIIAISLFTLSLYIHRVQA. Positions 48 to 69 are disordered; it reads ESSDFDEFGESEPKSEEELDPG. N-linked (GlcNAc...) asparagine glycosylation is found at Asn-78 and Asn-105. Sel1-like repeat units lie at residues 125–160, 244–274, 279–307, 311–344, 346–380, 464–492, and 498–528; these read PHAQSVMGFVYGIGMMRETSRSKSILHHHFAAAGGN, VAMHKIGLFYYFGLRGLRRDHAKALYWFSKA, LGYLYVKGYGVDKRNYTKAREYFEMAANN, SGHYNLGVLYLKGTGVKKDVRHATKYFFVAANAG, PKAFYQLAKMFHTGVGLTKNLEMATTFYKLVAERG, AALLIGDAYYYGRGTERDFVRAAEAYMYA, and AQAMFNLGYMHEHGEGLPFDLHLAKRYYDQA. Asn-293 carries N-linked (GlcNAc...) asparagine glycosylation.

Belongs to the sel-1 family.

Functionally, may be involved in the endoplasmic reticulum (ER) quality control system called ER-associated degradation (ERAD). The chain is ERAD-associated E3 ubiquitin-protein ligase component HRD3B from Arabidopsis thaliana (Mouse-ear cress).